The following is a 1789-amino-acid chain: Genome polyprotein (1789 aa).

The tract at residues M1–K25 is disordered. The tract at residues M1–R183 is interaction with host MAP1LC3A/LC3. A compositionally biased stretch (low complexity) spans A12–S23. The interval S184 to Q398 is interaction with NTPase. Residues H301–Q398 are interaction with NS4. Host ER membrane association stretches follow at residues K318–N349 and T360–Q398. Residues G399–A574 are interaction with NS1-2 and NS4 and homooligomerization. Positions R532–D697 constitute an SF3 helicase domain. An ATP-binding site is contributed by G560–T567. The tract at residues A651–D756 is important for mitochondrion targeting. A functions as endoplasmic reticulum export signal region spans residues Y826 to G832. The tract at residues R865–P910 is host membrane association. Positions D958–A981 are disordered. The span at K966–K976 shows a compositional bias: basic residues. The acidic stretch occupies residues D989–E994. Y992 bears the O-(5'-phospho-RNA)-tyrosine mark. The tract at residues W1084–E1100 is interaction with host EIF4G. One can recognise a Peptidase C37 domain in the interval A1101–E1281. Active-site for 3CLpro activity residues include H1130, E1154, and C1239. In terms of domain architecture, RdRp catalytic spans K1516–R1637. Mg(2+)-binding residues include D1520, D1522, D1624, and E1625.

Homodimer. Homooligomer. Interacts with NTPase; this interaction increases the proapoptotic activity of the NTPase and is crucial for the formation of the viral replication complex. Interacts with NS4; this interaction is crucial for the formation of the viral replication complex. Interacts (via N-terminus) with host VAPA. Interacts with host MAP1LC3A/LC3; this interaction does not seem to be linked to host autophagy, but rather plays a role in the formation of viral factories. As to quaternary structure, homooligomer. Interacts with NS1-2; this interaction increases the proapoptotic activity of the NTPase and is crucial for the formation of the viral replication complex. Interacts with NS4; this interaction increases the proapoptotic activity of the NTPase. In terms of assembly, homodimer. Monomer; in solution. Interacts with NTPase; this interaction increases the proapoptotic activity of the NTPase. Interacts with NS1-2; this interaction is crucial for the formation of the viral replication complex. As to quaternary structure, monomer. Interacts with the RNA-directed RNA polymerase; this interaction induces the multimerization of the RdRp and enhances its activity. Interacts with host IEF4G1; this interaction plays a role in translation of viral proteins. In terms of assembly, homohexamer; also forms fibrous hexameric oligomer. Interacts with the viral genome-linked protein; this interaction induces the multimerization of the RdRp and enhances its activity. Requires Mg(2+) as cofactor. It depends on Mn(2+) as a cofactor. Post-translationally, specific enzymatic cleavages in vivo yield mature proteins. 3CLpro is first autocatalytically cleaved, then processes the whole polyprotein. NS1/2-3 and NS3-4 sites are cleaved rapidly and NS4-5, NS5-6, and NS6-7 sites are processed subsequently and less efficiently. In terms of processing, VPg is uridylylated by the polymerase and is covalently attached to the 5'-end of the polyadenylated genomic and subgenomic RNAs. This uridylylated form acts as a nucleotide-peptide primer for the polymerase. Cleaved by host CASP3/caspase 3 at 18-22 h.p.i. The cleavage allows NS1 secretion, which is essential for intestinal infection and resistance to IFN-lambda.

The protein resides in the host Golgi apparatus membrane. It localises to the secreted. Its subcellular location is the host endoplasmic reticulum membrane. The protein localises to the host cytoplasm. It is found in the host perinuclear region. The catalysed reaction is a ribonucleoside 5'-triphosphate + H2O = a ribonucleoside 5'-diphosphate + phosphate + H(+). The enzyme catalyses Endopeptidase with a preference for cleavage when the P1 position is occupied by Glu-|-Xaa and the P1' position is occupied by Gly-|-Yaa.. It carries out the reaction RNA(n) + a ribonucleoside 5'-triphosphate = RNA(n+1) + diphosphate. With respect to regulation, inhibited by the chemical compound K36/GC376, which covalently binds to the nucleophilic cysteine residue. Inhibited by various macrocyclic inhibitors. Inhibited by the guanidine salt GuHCl. Induces the proliferation of the host smooth ER membranes forming long tubular structures. These remodeled membranes probably form the viral factories that contain the replication complex. Induces the disassembly of host Golgi. May play a role in viral replication by interacting with host VAPA, a vesicle-associated membrane protein that plays a role in SNARE-mediated vesicle fusion. This interaction may target replication complex to intracellular membranes. In terms of biological role, displays NTPase activity and RNA helix-unwinding activity. Displays RNA chaperone-like activity and destabilizes dsRNA. Induces the formation of convoluted membranes derived from the host ER. These remodeled membranes probably form the viral factories that contain the replication complex. Initiates host cell death by targeting the mitochondrial outer membrane, leading to the permeabilization of mitochondria, programmed host cell death and viral egress. Probably plays a role in preventing the assembly of host stress granules. Its function is as follows. Probable key protein responsible for the formation of membrane alterations by the virus. Induces the formation of convoluted membranes derived from the host ER. These remodeled membranes probably form the viral factories that contain the replication complex. May play a role in targeting replication complex to intracellular membranes. Induces the disassembly of host Golgi and antagonism of Golgi-dependent cellular protein secretion, probably via the mislocalization of COPII-coated vesicles. Functionally, viral genome-linked protein is covalently linked to the 5'-end of the positive-strand, negative-strand genomic RNAs and subgenomic RNA. Acts as a genome-linked replication primer. May recruit ribosome to viral RNA thereby promoting viral proteins translation. Interacts with host translation initiation complex to allow the translation of viral proteins. Induces the formation of aggregates of RNA-directed RNA polymerase in the presence of RNA. Through its interaction with the viral RNA-directed RNA polymerase, plays a crucial role in enhancing the polymerase activity. Processes the polyprotein. 3CLpro-RdRp is first released by autocleavage, then all other proteins are cleaved. May cleave host polyadenylate-binding protein thereby inhibiting cellular translation. In terms of biological role, replicates genomic and antigenomic RNA by recognizing replications specific signals. Also transcribes a subgenomic mRNA by initiating RNA synthesis internally on antigenomic RNA. This sgRNA codes for structural proteins. Catalyzes the covalent attachment VPg with viral RNAs. In Norovirus (strain Human/NoV/United States/Norwalk/1968/GI) (Hu/NV/NV/1968/US), this protein is Genome polyprotein.